The sequence spans 68 residues: Small integral membrane protein 10-like protein 3 (68 aa).

This chain is Small integral membrane protein 10-like protein 3, found in Homo sapiens (Human).